We begin with the raw amino-acid sequence, 241 residues long: Triosephosphate isomerase (241 aa).

9–11 (NWK) contacts substrate. The Electrophile role is filled by His-96. The active-site Proton acceptor is Glu-165. Residues Gly-171, Ser-204, and 225–226 (GG) each bind substrate.

It belongs to the triosephosphate isomerase family. Homodimer.

It localises to the cytoplasm. It catalyses the reaction D-glyceraldehyde 3-phosphate = dihydroxyacetone phosphate. Its pathway is carbohydrate biosynthesis; gluconeogenesis. It participates in carbohydrate degradation; glycolysis; D-glyceraldehyde 3-phosphate from glycerone phosphate: step 1/1. Its function is as follows. Involved in the gluconeogenesis. Catalyzes stereospecifically the conversion of dihydroxyacetone phosphate (DHAP) to D-glyceraldehyde-3-phosphate (G3P). The polypeptide is Triosephosphate isomerase (Nostoc sp. (strain PCC 7120 / SAG 25.82 / UTEX 2576)).